We begin with the raw amino-acid sequence, 393 residues long: Ribonucleoside-diphosphate reductase subunit M2 (393 aa).

Phosphoserine is present on Ser18. Fe cation contacts are provided by Asp142, Glu173, and His176. Tyr180 is an active-site residue. Positions 236, 270, and 273 each coordinate Fe cation.

This sequence belongs to the ribonucleoside diphosphate reductase small chain family. As to quaternary structure, heterodimer of a large and a small subunit. Fe cation serves as cofactor.

The protein localises to the cytoplasm. The enzyme catalyses a 2'-deoxyribonucleoside 5'-diphosphate + [thioredoxin]-disulfide + H2O = a ribonucleoside 5'-diphosphate + [thioredoxin]-dithiol. Functionally, provides the precursors necessary for DNA synthesis. Catalyzes the biosynthesis of deoxyribonucleotides from the corresponding ribonucleotides. In Drosophila melanogaster (Fruit fly), this protein is Ribonucleoside-diphosphate reductase subunit M2 (RnrS).